The sequence spans 697 residues: Potassium-transporting ATPase ATP-binding subunit (697 aa).

The next 4 helical transmembrane spans lie at 55–75 (PIMFVVEIGFIITLILSFLPS), 82–102 (GWFNITVSLILLFTVLFANFA), 245–265 (LTLIFLIVVVTLPIFTNYLGF), and 271–291 (VLVALLVCLIPTTIGGLLSAI). The 4-aspartylphosphate intermediate role is filled by D324. ATP is bound by residues D361, E365, 393–400 (FKAETRMS), and K412. 2 residues coordinate Mg(2+): D535 and D539. The next 3 membrane-spanning stretches (helical) occupy residues 605–625 (FAIIPAMFTLAIPQMEALNIM), 633–653 (AILSALIFNAVIIPLLIPLAM), and 677–697 (GGVIVPFIGIKVIDMIVGLFI).

Belongs to the cation transport ATPase (P-type) (TC 3.A.3) family. Type IA subfamily. The system is composed of three essential subunits: KdpA, KdpB and KdpC.

The protein localises to the cell membrane. It catalyses the reaction K(+)(out) + ATP + H2O = K(+)(in) + ADP + phosphate + H(+). Part of the high-affinity ATP-driven potassium transport (or Kdp) system, which catalyzes the hydrolysis of ATP coupled with the electrogenic transport of potassium into the cytoplasm. This subunit is responsible for energy coupling to the transport system and for the release of the potassium ions to the cytoplasm. The chain is Potassium-transporting ATPase ATP-binding subunit from Bacillus mycoides (strain KBAB4) (Bacillus weihenstephanensis).